Consider the following 680-residue polypeptide: DNA ligase (680 aa).

NAD(+) is bound by residues 38 to 42 (DAEYD), 87 to 88 (SL), and glutamate 119. Residue lysine 121 is the N6-AMP-lysine intermediate of the active site. Positions 142, 179, 296, and 320 each coordinate NAD(+). 4 residues coordinate Zn(2+): cysteine 414, cysteine 417, cysteine 432, and cysteine 438. In terms of domain architecture, BRCT spans 597 to 680 (IEDLPLKGLT…DLLRKHGRLE (84 aa)).

The protein belongs to the NAD-dependent DNA ligase family. LigA subfamily. Mg(2+) is required as a cofactor. It depends on Mn(2+) as a cofactor.

It catalyses the reaction NAD(+) + (deoxyribonucleotide)n-3'-hydroxyl + 5'-phospho-(deoxyribonucleotide)m = (deoxyribonucleotide)n+m + AMP + beta-nicotinamide D-nucleotide.. In terms of biological role, DNA ligase that catalyzes the formation of phosphodiester linkages between 5'-phosphoryl and 3'-hydroxyl groups in double-stranded DNA using NAD as a coenzyme and as the energy source for the reaction. It is essential for DNA replication and repair of damaged DNA. The polypeptide is DNA ligase (Cellvibrio japonicus (strain Ueda107) (Pseudomonas fluorescens subsp. cellulosa)).